Consider the following 311-residue polypeptide: Olfactory receptor 5P3 (311 aa).

Topologically, residues 1–25 (MGTGNDTTVVEFTLLGLSEDTTVCA) are extracellular. Asn5 carries N-linked (GlcNAc...) asparagine glycosylation. Residues 26-46 (ILFLVFLGIYVVTLMGNISII) traverse the membrane as a helical segment. Residues 47-54 (VLIRRSHH) lie on the Cytoplasmic side of the membrane. The helical transmembrane segment at 55–75 (LHTPMYIFLCHLAFVDIGYSS) threads the bilayer. The Extracellular portion of the chain corresponds to 76–99 (SVTPVMLMSFLRKETSLPVAGCVA). Residues Cys97 and Cys189 are joined by a disulfide bond. Residues 100–120 (QLCSVVTFGTAECFLLAAMAY) traverse the membrane as a helical segment. Topologically, residues 121–139 (DRYVAICSPLLYSTCMSPG) are cytoplasmic. The chain crosses the membrane as a helical span at residues 140 to 160 (VCIILVGMSYLGGCVNAWTFI). Residues 161-196 (GCLLRLSFCGPNKVNHFFCDYSPLLKLACSHDFTFE) lie on the Extracellular side of the membrane. The helical transmembrane segment at 197 to 217 (IIPAISSGSIIVATVCVIAIS) threads the bilayer. Residues 218 to 237 (YIYILITILKMHSTKGRHKA) are Cytoplasmic-facing. The helical transmembrane segment at 238–258 (FSTCTSHLTAVTLFYGTITFI) threads the bilayer. The Extracellular portion of the chain corresponds to 259 to 271 (YVMPKSSYSTDQN). Residues 272 to 292 (KVVSVFYTVVIPMLNPLIYSL) form a helical membrane-spanning segment. The Cytoplasmic segment spans residues 293 to 311 (RNKEIKGALKRELRIKIFS).

It belongs to the G-protein coupled receptor 1 family. Expressed in the tongue.

It localises to the cell membrane. Odorant receptor (Potential). May be involved in taste perception. In Homo sapiens (Human), this protein is Olfactory receptor 5P3 (OR5P3).